Consider the following 136-residue polypeptide: Protein NrdI (136 aa).

The protein belongs to the NrdI family.

Functionally, probably involved in ribonucleotide reductase function. The sequence is that of Protein NrdI from Shigella boydii serotype 4 (strain Sb227).